A 7119-amino-acid chain; its full sequence is Replicase polyprotein 1ab (7119 aa).

Residues 25–151 (RSDHVACTVP…EYTFLLRKNG (127 aa)) enclose the CoV Nsp1 globular domain. Residues 167 to 195 (TPYVEILDDLEADPTGKYSQNLLKKLIGG) form the BetaCoV Nsp1 C-terminal domain. Residues 197–472 (CIPIDQYMCG…WDKVVETANL (276 aa)) form the CoV Nsp2 N-terminal domain. Residues C339, C342, C358, and C360 each coordinate Zn(2+). A C4 region spans residues 339–360 (CNACGRGTWCTGNAIQGFACDC). One can recognise a CoV Nsp2 middle domain in the interval 478–712 (QRSLNFCQQF…LDIMSKAMKL (235 aa)). Residues 714–847 (HTNVSWAGTK…VSTLFRLKGG (134 aa)) form the CoV Nsp2 C-terminal domain. Residues 851–960 (KKVTFGDVNT…MTFSINPVED (110 aa)) enclose the Ubiquitin-like 1 domain. Macro domains are found at residues 1152 to 1321 (DLSK…KPDG) and 1322 to 1446 (LVYS…AIQT). The 74-residue stretch at 1446-1519 (TPETAFINNV…LEACRAYLTS (74 aa)) folds into the DPUP domain. Positions 1524–1579 (QVNIEVLVTIDGVNFRTVILNDTTTFRKQLGATFYKGVDISDAFPTVKMGGESLFV) constitute a Ubiquitin-like 2 domain. Residues 1593–1864 (EYYGTSDVTF…KVEVNPDLSN (272 aa)) form the Peptidase C16 domain. C1634 (for PL-PRO activity) is an active-site residue. Positions 1714, 1717, 1749, and 1751 each coordinate Zn(2+). The C4-type zinc finger occupies 1714-1751 (CTVCGIRDIEYTGMRACVYAGVNSMEELQSVFNETCVC). Active-site for PL-PRO activity residues include H1800 and D1815. The 118-residue stretch at 1878 to 1995 (TIKYSPATIL…QLYDVAPIVL (118 aa)) folds into the Nucleic acid-binding domain. The 122-residue stretch at 2012–2133 (HNVPVVDDVP…AKITVTATTA (122 aa)) folds into the G2M domain. The next 3 membrane-spanning stretches (helical) occupy residues 2112–2132 (VLLGASSLFASFAKITVTATT), 2145–2165 (FVVNYGVLQNMFVFLKMLFFL), and 2222–2242 (LFLLLCTTILLLSSIYHLVLF). An HD1 region spans residues 2112–2395 (VLLGASSLFA…VTHIPLHGLV (284 aa)). Residues 2259–2325 (LAIYKEVRSY…LQMLQTHITS (67 aa)) form the 3Ecto domain. Cystine bridges form between C2275-C2303 and C2293-C2300. 3 helical membrane-spanning segments follow: residues 2326-2346 (YVLNIDWIWFALEFFLAYVLY), 2350-2370 (FNVLLLVVTAQYFFAYTSAFV), and 2375-2395 (YNYIVSGLFFLVTHIPLHGLV). Residues 2409-2499 (KFYSHVINGC…TLRRLIKPTD (91 aa)) form a Y1 region. In terms of domain architecture, CoV Nsp3 Y spans 2409–2782 (KFYSHVINGC…LSVKFSATKI (374 aa)). Zn(2+) contacts are provided by H2413, C2418, C2423, C2426, C2459, H2462, C2466, and C2469. The segment at 2413–2426 (HVINGCKDTACLLC) is ZF1. A ZF2 region spans residues 2459 to 2469 (CCKHNWNCVEC). Residues 2500-2598 (QSHYYVDSVV…LVDVNLVTTV (99 aa)) form a Y2 region. A coV-Y region spans residues 2500–2782 (QSHYYVDSVV…LSVKFSATKI (283 aa)). The Y3 stretch occupies residues 2599 to 2681 (GDSREIAIKM…DALQYAHKND (83 aa)). The tract at residues 2682-2782 (IQLTTECYNN…LSVKFSATKI (101 aa)) is Y4. 4 consecutive transmembrane segments (helical) span residues 2800–2820 (GYCILTLFVFTVAVLSWFCLP), 3072–3092 (STSLAMGLVLCVFLTAAFYYI), 3105–3125 (CAVVAVVAALLNSLCLCFIVA), and 3149–3169 (AFIMHISWYVMFGAVVPIWML). The segment at 2800–3169 (GYCILTLFVF…FGAVVPIWML (370 aa)) is HD2. Residues 3195 to 3291 (VFTDGKLNCS…NCSVTSSVLQ (97 aa)) form the Nsp4C domain. The 306-residue stretch at 3292–3597 (SGLVKMSAPS…NMQVMGVVMQ (306 aa)) folds into the Peptidase C30 domain. Active-site for 3CL-PRO activity residues include H3332 and C3439. 7 helical membrane passes run 3603-3623 (ISYGFIHWLISTFVLAYVSVM), 3637-3657 (TIPTQMTPLLLGFMACVMFTV), 3662-3682 (TFMSLFLLPVALCLTYANIVY), 3707-3727 (RTTHFDFGLYISLSFVLAIIV), 3735-3755 (MSNLALALCSGVMWFYTYVIG), 3784-3804 (LAKFISGLVFFYAPHLGFILP), and 3808-3828 (LVLLIYLGLGYMCTMYFGVFS). Residues 3603-3828 (ISYGFIHWLI…MCTMYFGVFS (226 aa)) are HD3. The region spanning 3890 to 3972 (SKLTDLKCTS…DLFENSSVLQ (83 aa)) is the RdRp Nsp7 cofactor domain. The region spanning 3973–4171 (ATLTEFSHLA…RSSSSAVKLQ (199 aa)) is the RdRp Nsp8 cofactor domain. Residues 4172–4281 (NNEIHPKGLK…GHIAATVRLQ (110 aa)) enclose the Nsp9 ssRNA-binding domain. In terms of domain architecture, ExoN/MTase coactivator spans 4282-4420 (AGANTEFASN…DALRNNTVPQ (139 aa)). Zn(2+)-binding residues include C4355, C4358, H4364, C4371, C4397, C4400, C4408, and C4410. 2 zinc fingers span residues 4355 to 4371 (CLYCRAHIEHPDVSGVC) and 4397 to 4410 (CNVCQYWVGYGCNC). The NiRAN domain occupies 4426–4683 (FLNRVRGSSV…AAETHKDCDF (258 aa)). Mn(2+)-binding residues include N4631 and D4640. Residues 4688 to 4786 (IEWPLLEYDY…MNMDFNIHRH (99 aa)) enclose the Nsp12 Interface domain. Zn(2+) contacts are provided by H4717, C4723, C4728, C4732, and C4909. The 568-residue stretch at 4787-5354 (RLALKELMMY…DLYSSPTTLQ (568 aa)) folds into the Nsp12 RNA-dependent RNA polymerase domain. The tract at residues 4789–5003 (ALKELMMYAA…HQKMLKSMAA (215 aa)) is rdRp Fingers N-ter. The interval 5004 to 5042 (TRGATCVIGTTKFYGGWDFMLKTLYKDVESPHLMGWDYP) is rdRp Palm N-ter. The region spanning 5034–5196 (PHLMGWDYPK…CYNSDYAAKG (163 aa)) is the RdRp catalytic domain. Positions 5043-5101 (KCDRAMPNMCRILASLILARKHSTCCTNSDRFYRLANECAQVLSEYVLCGGGYYVKPGG) are rdRp Fingers C-ter. H5064, C5067, and C5068 together coordinate Zn(2+). Residues 5102–5237 (TSSGDATTAY…EKGPHEFCSQ (136 aa)) form a rdRp Palm C-ter region. Residues S5181, D5182, and D5183 contribute to the active site. The rdRp Thumb stretch occupies residues 5238-5354 (HTLYIKDGDD…DLYSSPTTLQ (117 aa)). Residues 5355–5467 (AVGSCVVCHS…MEFNRLATCD (113 aa)) enclose the CV ZBD domain. Residues C5359, C5362, C5370, C5373, C5380, C5383, H5387, H5393, C5404, C5409, C5426, and H5429 each contribute to the Zn(2+) site. The region spanning 5611-5792 (TVPEEFANHV…MCNLGPDIFL (182 aa)) is the (+)RNA virus helicase ATP-binding domain. ATP is bound at residue 5636-5643 (GPPGTGKS). The region spanning 5793-5967 (SVCYRCPKEI…GLFKDCSRED (175 aa)) is the (+)RNA virus helicase C-terminal domain. Positions 6024–6239 (LFITRDEAIR…RCLAIYDCFI (216 aa)) constitute an ExoN domain. Active-site residues include D6042, E6044, and E6143. C6159, C6162, C6178, H6181, H6209, C6213, and H6216 together coordinate Zn(2+). Residues H6220 and D6225 contribute to the active site. C6231 is a Zn(2+) binding site. One can recognise an N7-MTase domain in the interval 6248–6475 (YPYISHEQKL…NLWSTFVKVQ (228 aa)). An S-adenosyl-L-methionine-binding site is contributed by 6283 to 6289 (DIGNPKG). The gpppA-binding stretch occupies residues 6361–6375 (CNGGSLYVNKHAFHT). 4 residues coordinate Zn(2+): C6399, C6421, C6432, and H6435. The Nsp15 N-terminal oligomerization domain occupies 6476 to 6536 (GLENIAFNVI…NVAFELYAKR (61 aa)). Residues 6537–6658 (AVRSHPDLNL…LYKKVNNEFV (122 aa)) form the AV-Nsp11N/CoV-Nsp15M domain. One can recognise a NendoU domain in the interval 6675–6814 (TVLTPMEEDF…RDGKVQTFYP (140 aa)). Catalysis depends on residues H6705, H6720, K6760, K6863, D6947, K6987, and E7020. The Nidovirus-type SAM-dependent 2'-O-MTase domain occupies 6819-7113 (TNDWKPGLTM…TLNVSTDVLV (295 aa)).

Belongs to the coronaviruses polyprotein 1ab family. Interacts with host PHB and PHB2. As to quaternary structure, interacts with papain-like protease nsp3 and non-structural protein 6. In terms of assembly, monomer. Homodimer. Only the homodimer shows catalytic activity. Interacts with nsp8 and nsp12 to form the replication-transcription complex (RTC): nsp12, nsp7, two subunits of nsp8, and up to two subunits of nsp13. As to quaternary structure, interacts with nsp7, nsp13 and nsp12 to form the replication-transcription complex (RTC): nsp12, nsp7, two subunits of nsp8, and up to two subunits of nsp13. In terms of assembly, interacts with nsp12. Interacts with proofreading exoribonuclease nsp14 and 2'-O-methyltransferase nsp16; these interactions enhance nsp14 and nsp16 enzymatic activities. As to quaternary structure, interacts with nsp7 and nsp8 to form the replication-transcription complex (RTC): nsp12, nsp7, two subunits of nsp8, and up to two subunits of nsp13. Interacts with nsp9. In terms of assembly, interacts with nsp8 to form the replication-transcription complex (RTC): nsp12, nsp7, two subunits of nsp8, and up to two subunits of nsp13. Requires Mn(2+) as cofactor. It depends on Mg(2+) as a cofactor. Specific enzymatic cleavages in vivo by its own proteases yield mature proteins. 3CL-PRO and PL-PRO proteinases are autocatalytically processed.

The protein resides in the host membrane. Its subcellular location is the host cytoplasm. It localises to the host perinuclear region. The protein localises to the host endoplasmic reticulum-Golgi intermediate compartment. It catalyses the reaction RNA(n) + a ribonucleoside 5'-triphosphate = RNA(n+1) + diphosphate. The catalysed reaction is ATP + H2O = ADP + phosphate + H(+). It carries out the reaction Thiol-dependent hydrolysis of ester, thioester, amide, peptide and isopeptide bonds formed by the C-terminal Gly of ubiquitin (a 76-residue protein attached to proteins as an intracellular targeting signal).. The enzyme catalyses a 5'-end (N(7)-methyl 5'-triphosphoguanosine)-ribonucleoside in mRNA + S-adenosyl-L-methionine = a 5'-end (N(7)-methyl 5'-triphosphoguanosine)-(2'-O-methyl-ribonucleoside) in mRNA + S-adenosyl-L-homocysteine + H(+). It catalyses the reaction uridylyl-uridylyl-ribonucleotide-RNA = a 3'-end uridylyl-2',3'-cyclophospho-uridine-RNA + a 5'-end dephospho-ribonucleoside-RNA. The catalysed reaction is a 5'-end diphospho-ribonucleoside in mRNA + GTP + H(+) = a 5'-end (5'-triphosphoguanosine)-ribonucleoside in mRNA + diphosphate. It carries out the reaction a 5'-end (5'-triphosphoguanosine)-ribonucleoside in mRNA + S-adenosyl-L-methionine = a 5'-end (N(7)-methyl 5'-triphosphoguanosine)-ribonucleoside in mRNA + S-adenosyl-L-homocysteine. Its function is as follows. The replicase polyprotein of coronaviruses is a multifunctional protein: it contains the activities necessary for the transcription of negative stranded RNA, leader RNA, subgenomic mRNAs and progeny virion RNA as well as proteinases responsible for the cleavage of the polyprotein into functional products. Functionally, inhibits host translation by interacting with the 40S ribosomal subunit. The nsp1-40S ribosome complex further induces an endonucleolytic cleavage near the 5'UTR of host mRNAs, targeting them for degradation. Viral mRNAs are not susceptible to nsp1-mediated endonucleolytic RNA cleavage thanks to the presence of a 5'-end leader sequence and are therefore protected from degradation. By suppressing host gene expression, nsp1 facilitates efficient viral gene expression in infected cells and evasion from host immune response. May play a role in the modulation of host cell survival signaling pathway by interacting with host PHB and PHB2. Indeed, these two proteins play a role in maintaining the functional integrity of the mitochondria and protecting cells from various stresses. In terms of biological role, responsible for the cleavages located at the N-terminus of the replicase polyprotein. In addition, PL-PRO possesses a deubiquitinating/deISGylating activity and processes both 'Lys-48'- and 'Lys-63'-linked polyubiquitin chains from cellular substrates. Participates together with nsp4 in the assembly of virally-induced cytoplasmic double-membrane vesicles necessary for viral replication. Antagonizes innate immune induction of type I interferon by blocking the phosphorylation, dimerization and subsequent nuclear translocation of host IRF3. Also prevents host NF-kappa-B signaling. Its function is as follows. Participates in the assembly of virally-induced cytoplasmic double-membrane vesicles necessary for viral replication. Functionally, cleaves the C-terminus of replicase polyprotein at 11 sites. Recognizes substrates containing the core sequence [ILMVF]-Q-|-[SGACN]. Also able to bind an ADP-ribose-1''-phosphate (ADRP). Plays a role in the initial induction of autophagosomes from host endoplasmic reticulum. Later, limits the expansion of these phagosomes that are no longer able to deliver viral components to lysosomes. In terms of biological role, forms a hexadecamer with nsp8 (8 subunits of each) that may participate in viral replication by acting as a primase. Alternatively, may synthesize substantially longer products than oligonucleotide primers. Its function is as follows. Forms a hexadecamer with nsp7 (8 subunits of each) that may participate in viral replication by acting as a primase. Alternatively, may synthesize substantially longer products than oligonucleotide primers. Functionally, forms a primer, NSP9-pU, which is utilized by the polymerase for the initiation of RNA chains. Interacts with ribosome signal recognition particle RNA (SRP). Together with NSP8, suppress protein integration into the cell membrane, thereby disrupting host immune defenses. Plays a pivotal role in viral transcription by stimulating both nsp14 3'-5' exoribonuclease and nsp16 2'-O-methyltransferase activities. Therefore plays an essential role in viral mRNAs cap methylation. In terms of biological role, RNA-directed RNA polymerase that catalyzes the transcription of viral genomic and subgenomic RNAs. Acts in complex with nsp7 and nsp8 to transcribe both the minus and positive strands of genomic RNA. The kinase-like NiRAN domain of NSP12 attaches one or more nucleotides to the amino terminus of NSP9, forming a covalent RNA-protein intermediate that serves as transcription/replication primer. Subgenomic RNAs (sgRNAs) are formed by discontinuous transcription: The polymerase has the ability to pause at transcription-regulating sequences (TRS) and jump to the leader TRS, resulting in a major deletion. This creates a series of subgenomic RNAs that are replicated, transcribed and translated. In addition, Nsp12 is a subunit of the viral RNA capping enzyme that catalyzes the RNA guanylyltransferase reaction for genomic and sub-genomic RNAs. Subsequently, the NiRAN domain transfers RNA to GDP, and forms the core cap structure GpppA-RNA. Its function is as follows. RNA-directed RNA polymerase that catalyzes the transcription of viral genomic and subgenomic RNAs. Acts in complex with nsp7 and nsp8 to transcribe both the minus and positive strands of genomic RNA. Subgenomic RNAs (sgRNAs) are formed by discontinuous transcription: The polymerase has the ability to pause at transcription-regulating sequences (TRS) and jump to the leader TRS, resulting in a major deletion. This creates a series of subgenomic RNAs that are replicated, transcribed and translated. In addition, Nsp12 is a subunit of the viral RNA capping enzyme that catalyzes the RNA guanylyltransferase reaction for genomic and sub-genomic RNAs. The kinase-like NiRAN domain of NSP12 transfers RNA to the amino terminus of NSP9, forming a covalent RNA-protein intermediate. Subsequently, the NiRAN domain transfers RNA to GDP, and forms the core cap structure GpppA-RNA. Functionally, multi-functional protein with a zinc-binding domain in N-terminus displaying RNA and DNA duplex-unwinding activities with 5' to 3' polarity. Activity of helicase is dependent on magnesium. Plays a role in viral RNA synthesis through two distinct activities. The N7-guanine methyltransferase activity plays a role in the formation of the cap structure GpppA-RNA. The proofreading exoribonuclease reduces the sensitivity of the virus to RNA mutagens during replication. This activity acts on both ssRNA and dsRNA in a 3'-5' direction. In terms of biological role, plays a role in viral transcription/replication and prevents the simultaneous activation of host cell dsRNA sensors, such as MDA5/IFIH1, OAS, and PKR. Acts by degrading the 5'-polyuridines generated during replication of the poly(A) region of viral genomic and subgenomic RNAs. Catalyzes a two-step reaction in which a 2'3'-cyclic phosphate (2'3'-cP) is first generated by 2'-O transesterification, which is then hydrolyzed to a 3'-phosphate (3'-P). If not degraded, poly(U) RNA would hybridize with poly(A) RNA tails and activate host dsRNA sensors. Its function is as follows. Methyltransferase that mediates mRNA cap 2'-O-ribose methylation to the 5'-cap structure of viral mRNAs. N7-methyl guanosine cap is a prerequisite for binding of nsp16. Therefore plays an essential role in viral mRNAs cap methylation which is essential to evade immune system. This Tylonycteris pachypus (Lesser bamboo bat) protein is Replicase polyprotein 1ab (rep).